The chain runs to 837 residues: Protein translocase subunit SecA (837 aa).

Residues Gln-85, 103-107 (GEGKT), and Asp-493 each bind ATP. Zn(2+)-binding residues include Cys-821, Cys-823, Cys-832, and His-833.

Belongs to the SecA family. In terms of assembly, monomer and homodimer. Part of the essential Sec protein translocation apparatus which comprises SecA, SecYEG and auxiliary proteins SecDF. Other proteins may also be involved. Zn(2+) serves as cofactor.

The protein resides in the cell membrane. The protein localises to the cytoplasm. The enzyme catalyses ATP + H2O + cellular proteinSide 1 = ADP + phosphate + cellular proteinSide 2.. Its function is as follows. Part of the Sec protein translocase complex. Interacts with the SecYEG preprotein conducting channel. Has a central role in coupling the hydrolysis of ATP to the transfer of proteins into and across the cell membrane, serving as an ATP-driven molecular motor driving the stepwise translocation of polypeptide chains across the membrane. The chain is Protein translocase subunit SecA from Streptococcus pneumoniae serotype 19F (strain G54).